Reading from the N-terminus, the 523-residue chain is Transcription initiation factor TFIID subunit 4 (523 aa).

Disordered stretches follow at residues 1 to 100 and 185 to 241; these read MSLP…AASD and ASVE…VQGG. The span at 58–77 shows a compositional bias: low complexity; that stretch reads QMQPPRQPIQQQMQHFQSPS. Residues 78 to 87 show a composition bias toward pro residues; that stretch reads PMAPQGPPGT. One can recognise a TAFH domain in the interval 101 to 199; sequence DKNVTKCVRF…VNPPPGYVFN (99 aa). A compositionally biased stretch (pro residues) spans 204–213; that stretch reads PGPPQPPPPQ. Residues 214–236 are compositionally biased toward low complexity; it reads QQSQQQPPLEMRQIPNPNQIPPQ. Residues 329–383 are histone-fold; it reads LKPDEVLNRITKRMMSSCSVEEEALVAISDAVESHLRELITLMAGVAEHRVESLR. Residues 333–382 form a necessary and sufficient for interaction with oma-1 region; the sequence is EVLNRITKRMMSSCSVEEEALVAISDAVESHLRELITLMAGVAEHRVESL. Residues 407-435 are disordered; it reads QEEELRESREKESLIRMSKNKNSGKETIE.

Belongs to the TAF4 family. Component of the TFIID basal transcription factor complex, composed of TATA-box-binding protein tbp-1, and a number of TBP-associated factors (TAFs). Interacts (via histone-fold domain) with oma-1 (via histone-fold domain). May also interact with oma-2. Interacts (via histone-fold domain) with taf-12 (via the histone-fold domain).

It is found in the nucleus. The protein localises to the cytoplasm. The TFIID basal transcription factor complex plays a major role in the initiation of RNA polymerase II (Pol II)-dependent transcription. TFIID recognizes and binds promoters via its subunit tbp-1, a TATA-box-binding protein, and promotes assembly of the pre-initiation complex (PIC). The TFIID complex consists of tbp-1 and TBP-associated factors (TAFs), including taf-4. Essential for early embryonic development, probably acting via activating transcription initiation by RNA polymerase II, as part of the TFIID complex. In early embryos, but not oocytes, remains, presumably inactive, in the cytoplasm as a result of binding to oma-1. Upon degradation of oma-1, taf-4 is released and bound by taf-12, and the taf-4/12 heterodimer translocates to the nucleus and transcriptional repression is relieved. Involved in lifespan extension in a manner dependent upon mitochondrial function. Plays a role in modulating polyribosome formation. This chain is Transcription initiation factor TFIID subunit 4, found in Caenorhabditis elegans.